Reading from the N-terminus, the 419-residue chain is uncharacterized protein (419 aa).

11 helical membrane passes run 1-21 (MTTVSAIGALVALIVAIFLIL), 24-44 (VSPAYGMLVGALVGGLIGGAD), 66-86 (ILAAGVLAGVLIESGAANSIT), 101-121 (ALALATMILTAVGVFVDVAVI), 174-194 (SVMMAGIIPALFGLILTYFLA), 216-236 (NLPSFLTALVAPLVAILLLAL), 242-262 (IKVDPLIALPLGGLIGAFCMG), 280-300 (PVAIMLLGTGALAGIIANSGL), 311-331 (SGLPSYILAPISGVLMSLATA), 349-369 (LELGVSSLAGAAMIHAGATVF), and 396-416 (IPYESAVGLMMTIVSTLIFGV).

The protein belongs to the CitM (TC 2.A.11) transporter family.

It is found in the cell membrane. This is an uncharacterized protein from Haemophilus influenzae (strain ATCC 51907 / DSM 11121 / KW20 / Rd).